A 502-amino-acid chain; its full sequence is RxLR effector protein BLN06 (502 aa).

An N-terminal signal peptide occupies residues 1–20; that stretch reads MTLLHCWLLLVGHLASTAYA. Residue Asn-38 is glycosylated (N-linked (GlcNAc...) asparagine). A dEER motif is present at residues 50–53; it reads LEER.

This sequence belongs to the RxLR effector family.

It localises to the secreted. Its subcellular location is the host cell membrane. Its function is as follows. Secreted effector that triggers a robust hypersensitive response (HR) in Lactuca serriola LS102. The response to BLN06 was visible as chlorosis but not as strong necrosis. The polypeptide is RxLR effector protein BLN06 (Bremia lactucae (Lettuce downy mildew)).